The primary structure comprises 341 residues: MFRSMIVRSASPVKQGLLRRGFASESVPDRKVVILGAAGGIGQPLSLLMKLNPLVSSLSLYDIANTPGVAADVGHINTRSQVSGYMGDDDLGKALEGADLVIIPAGVPRKPGMTRDDLFNINAGIVKNLSIAIAKYCPQALVNMISNPVNSTVPIAAEIFKKAGTYDEKKLFGVTTLDVVRARTFYAGKSDVNVAEVNVPVVGGHAGITILPLFSQASPQANLSDDLIRALTKRTQDGGTEVVEAKAGKGSATLSMAYAGALFADACLKGLNGVPNVVECSFVQSTITELPFFASKVRLGKNGVEEVLDLGPLSDFEKEGLEALKAELKSSIEKGIKFANQ.

A mitochondrion-targeting transit peptide spans 1–22; the sequence is MFRSMIVRSASPVKQGLLRRGF. NAD(+) contacts are provided by residues 36-42 and D62; that span reads GAAGGIG. Residues R109 and R115 each contribute to the substrate site. Residues N122 and 145–147 contribute to the NAD(+) site; that span reads ISN. Substrate contacts are provided by N147 and R181. H205 serves as the catalytic Proton acceptor. M256 lines the NAD(+) pocket.

It belongs to the LDH/MDH superfamily. MDH type 1 family. In terms of assembly, homodimer. Expressed in rosette leaves at low levels.

It localises to the mitochondrion matrix. It carries out the reaction (S)-malate + NAD(+) = oxaloacetate + NADH + H(+). Its function is as follows. Catalyzes a reversible NAD-dependent dehydrogenase reaction involved in central metabolism and redox homeostasis between organelle compartments. Required for carbon dioxide and energy partitioning in leaves. May limit photorespiration during the dark phase. Can convert 2-ketoglutarate to L-2-hydroxyglutarate in vitro. This Arabidopsis thaliana (Mouse-ear cress) protein is Malate dehydrogenase 2, mitochondrial.